The following is a 277-amino-acid chain: Radial spoke head protein 9 homolog (277 aa).

This sequence belongs to the flagellar radial spoke RSP9 family. In terms of assembly, component of axonemal radial spoke complexes.

The protein resides in the cytoplasm. It localises to the cytoskeleton. It is found in the cilium axoneme. Its subcellular location is the flagellum axoneme. The protein localises to the cell projection. The protein resides in the kinocilium. Functions as part of axonemal radial spoke complexes that play an important part in the motility of sperm and cilia. Required for motility of olfactory and neural cilia and for the structural integrity of ciliary axonemes in both 9+0 and 9+2 motile cilia. Essential for both the radial spoke head assembly and the central pair microtubule stability in ependymal motile cilia. The sequence is that of Radial spoke head protein 9 homolog (rsph9) from Danio rerio (Zebrafish).